A 346-amino-acid polypeptide reads, in one-letter code: Isopentenyl-diphosphate delta-isomerase (346 aa).

Residue 9–10 (RK) coordinates substrate. FMN-binding positions include Ser-67, 68–70 (SMT), Ser-98, and Asn-127. 98–100 (SQR) provides a ligand contact to substrate. Position 162 (Gln-162) interacts with substrate. Glu-163 contacts Mg(2+). Residues Lys-194, Thr-224, 274–276 (GIR), and 295–296 (AA) each bind FMN.

It belongs to the IPP isomerase type 2 family. As to quaternary structure, homooctamer. Dimer of tetramers. FMN is required as a cofactor. Requires NADPH as cofactor. It depends on Mg(2+) as a cofactor.

The protein localises to the cytoplasm. The catalysed reaction is isopentenyl diphosphate = dimethylallyl diphosphate. Functionally, involved in the biosynthesis of isoprenoids. Catalyzes the 1,3-allylic rearrangement of the homoallylic substrate isopentenyl (IPP) to its allylic isomer, dimethylallyl diphosphate (DMAPP). In Stutzerimonas stutzeri (strain A1501) (Pseudomonas stutzeri), this protein is Isopentenyl-diphosphate delta-isomerase.